We begin with the raw amino-acid sequence, 329 residues long: Short-chain dehydrogenase/reductase tropG (329 aa).

Residues Lys57, Asp86, Asn113, Tyr203, and Lys207 each coordinate NADP(+). The active-site Proton acceptor is Tyr203. The active-site Lowers pKa of active site Tyr is the Lys207.

This sequence belongs to the short-chain dehydrogenases/reductases (SDR) family.

It participates in secondary metabolite biosynthesis. Functionally, short-chain dehydrogenase/reductase; part of the gene cluster that mediates the biosynthesis of the tropolone class of fungal maleic anhydrides. The pathway begins with the synthesis of 3-methylorcinaldehyde by the non-reducing polyketide synthase (PKS) tropA. 3-methylorcinaldehyde is the substrate for the FAD-dependent monooxygenase tropB to yield a dearomatized hydroxycyclohexadione. The 2-oxoglutarate-dependent dioxygenase tropC then performs the oxidative ring expansion to provide the first tropolone metabolite stipitaldehyde. Trop D converts stipitaldehyde into stipitacetal which is in turn converted to stipitalide by the short-chain dehydrogenase/reductase tropE. The next steps involve tropF, tropG, tropH, tropI and tropJ to form successive tropolone maleic anhydrides including stipitaldehydic, stipitatonic and stipitatic acids. In Talaromyces stipitatus (strain ATCC 10500 / CBS 375.48 / QM 6759 / NRRL 1006) (Penicillium stipitatum), this protein is Short-chain dehydrogenase/reductase tropG.